The chain runs to 314 residues: Methionyl-tRNA formyltransferase (314 aa).

A (6S)-5,6,7,8-tetrahydrofolate-binding site is contributed by 110 to 113 (SLLP).

It belongs to the Fmt family.

It carries out the reaction L-methionyl-tRNA(fMet) + (6R)-10-formyltetrahydrofolate = N-formyl-L-methionyl-tRNA(fMet) + (6S)-5,6,7,8-tetrahydrofolate + H(+). Functionally, attaches a formyl group to the free amino group of methionyl-tRNA(fMet). The formyl group appears to play a dual role in the initiator identity of N-formylmethionyl-tRNA by promoting its recognition by IF2 and preventing the misappropriation of this tRNA by the elongation apparatus. This is Methionyl-tRNA formyltransferase from Lactobacillus johnsonii (strain CNCM I-12250 / La1 / NCC 533).